A 341-amino-acid polypeptide reads, in one-letter code: L-threonine 3-dehydrogenase (341 aa).

Cysteine 38 serves as a coordination point for Zn(2+). Residues threonine 40 and histidine 43 each act as charge relay system in the active site. Histidine 63, glutamate 64, cysteine 93, cysteine 96, cysteine 99, and cysteine 107 together coordinate Zn(2+). NAD(+)-binding positions include isoleucine 175, aspartate 195, arginine 200, 262-264 (LGI), and 286-287 (IY).

This sequence belongs to the zinc-containing alcohol dehydrogenase family. In terms of assembly, homotetramer. Zn(2+) is required as a cofactor.

The protein localises to the cytoplasm. It carries out the reaction L-threonine + NAD(+) = (2S)-2-amino-3-oxobutanoate + NADH + H(+). It functions in the pathway amino-acid degradation; L-threonine degradation via oxydo-reductase pathway; glycine from L-threonine: step 1/2. Catalyzes the NAD(+)-dependent oxidation of L-threonine to 2-amino-3-ketobutyrate. This chain is L-threonine 3-dehydrogenase, found in Klebsiella pneumoniae subsp. pneumoniae (strain ATCC 700721 / MGH 78578).